Here is a 128-residue protein sequence, read N- to C-terminus: Ribosome-binding factor A (128 aa).

The protein belongs to the RbfA family. As to quaternary structure, monomer. Binds 30S ribosomal subunits, but not 50S ribosomal subunits or 70S ribosomes.

It is found in the cytoplasm. Its function is as follows. One of several proteins that assist in the late maturation steps of the functional core of the 30S ribosomal subunit. Associates with free 30S ribosomal subunits (but not with 30S subunits that are part of 70S ribosomes or polysomes). Required for efficient processing of 16S rRNA. May interact with the 5'-terminal helix region of 16S rRNA. This Haemophilus influenzae (strain 86-028NP) protein is Ribosome-binding factor A.